Here is a 150-residue protein sequence, read N- to C-terminus: Avidin-related protein 7 (150 aa).

The N-terminal stretch at 1–24 (MVHATSPLLLLLLLSLALVAPGLS) is a signal peptide. The Avidin-like domain maps to 26–147 (RKCSLTGEWD…GYNNFTRQRT (122 aa)). A disulfide bond links C28 and C105. Biotin contacts are provided by N36 and S40. N-linked (GlcNAc...) asparagine glycans are attached at residues N41 and N54. Residues Y57, T59, and D63 each contribute to the biotin site. N-linked (GlcNAc...) asparagine glycosylation is present at N93. Residues S95, S99, and N140 each contribute to the biotin site. The N-linked (GlcNAc...) asparagine glycan is linked to N141.

The protein belongs to the avidin/streptavidin family. As to quaternary structure, homotetramer. In terms of processing, glycosylated.

The protein resides in the secreted. In terms of biological role, forms a strong non-covalent specific complex with biotin. This Gallus gallus (Chicken) protein is Avidin-related protein 7 (AVR7).